The sequence spans 405 residues: Putative polysaccharide ligase RP358 (405 aa).

10 helical membrane passes run 23–43 (IAATVAFFLLSIIITGFISFI), 77–97 (LFTAWCFISCLFAVHPINSLV), 120–140 (VLYIKNSLILGIITAILLFFI), 156–178 (FGLYMLDRGCALLSITTWVAIII), 201–221 (ISDSLASFLGFSIGGIIFILA), 227–247 (IFFKLITISLITGSLLFPVIA), 270–290 (LFIWHFVANKIIIRPILGYGF), 322–342 (ILQITLELGILGLALFLCLVY), 353–375 (VSNFRAASYSCFINYYIIGMISY), and 377–397 (IWQTWWILSGIWILVLMKLLV).

The protein belongs to the O-antigen ligase family.

Its subcellular location is the membrane. The polypeptide is Putative polysaccharide ligase RP358 (Rickettsia prowazekii (strain Madrid E)).